The sequence spans 381 residues: Anhydro-N-acetylmuramic acid kinase (381 aa).

22 to 29 (GTSIDGID) lines the ATP pocket.

This sequence belongs to the anhydro-N-acetylmuramic acid kinase family.

The enzyme catalyses 1,6-anhydro-N-acetyl-beta-muramate + ATP + H2O = N-acetyl-D-muramate 6-phosphate + ADP + H(+). It functions in the pathway amino-sugar metabolism; 1,6-anhydro-N-acetylmuramate degradation. It participates in cell wall biogenesis; peptidoglycan recycling. Functionally, catalyzes the specific phosphorylation of 1,6-anhydro-N-acetylmuramic acid (anhMurNAc) with the simultaneous cleavage of the 1,6-anhydro ring, generating MurNAc-6-P. Is required for the utilization of anhMurNAc either imported from the medium or derived from its own cell wall murein, and thus plays a role in cell wall recycling. The chain is Anhydro-N-acetylmuramic acid kinase from Xylella fastidiosa (strain Temecula1 / ATCC 700964).